The primary structure comprises 119 residues: Ribosome-binding factor A (119 aa).

This sequence belongs to the RbfA family. In terms of assembly, monomer. Binds 30S ribosomal subunits, but not 50S ribosomal subunits or 70S ribosomes.

The protein localises to the cytoplasm. In terms of biological role, one of several proteins that assist in the late maturation steps of the functional core of the 30S ribosomal subunit. Associates with free 30S ribosomal subunits (but not with 30S subunits that are part of 70S ribosomes or polysomes). Required for efficient processing of 16S rRNA. May interact with the 5'-terminal helix region of 16S rRNA. This is Ribosome-binding factor A from Chlorobium phaeovibrioides (strain DSM 265 / 1930) (Prosthecochloris vibrioformis (strain DSM 265)).